The chain runs to 155 residues: SsrA-binding protein (155 aa).

It belongs to the SmpB family.

Its subcellular location is the cytoplasm. Its function is as follows. Required for rescue of stalled ribosomes mediated by trans-translation. Binds to transfer-messenger RNA (tmRNA), required for stable association of tmRNA with ribosomes. tmRNA and SmpB together mimic tRNA shape, replacing the anticodon stem-loop with SmpB. tmRNA is encoded by the ssrA gene; the 2 termini fold to resemble tRNA(Ala) and it encodes a 'tag peptide', a short internal open reading frame. During trans-translation Ala-aminoacylated tmRNA acts like a tRNA, entering the A-site of stalled ribosomes, displacing the stalled mRNA. The ribosome then switches to translate the ORF on the tmRNA; the nascent peptide is terminated with the 'tag peptide' encoded by the tmRNA and targeted for degradation. The ribosome is freed to recommence translation, which seems to be the essential function of trans-translation. The protein is SsrA-binding protein of Streptococcus equi subsp. equi (strain 4047).